We begin with the raw amino-acid sequence, 337 residues long: Putative long-chain-alcohol O-fatty-acyltransferase 10 (337 aa).

Helical transmembrane passes span 7–27 (SFVK…YIPS), 38–58 (SVLP…FTIF), 59–79 (SSTT…LFAF), 82–102 (GPLL…CLPI), 142–162 (ILLL…LLTI), 228–248 (MGCM…YFYI), 254–274 (TLEV…EIAV), and 285–305 (MLLR…LFFG).

This sequence belongs to the wax synthase family.

The protein localises to the membrane. The enzyme catalyses a long chain fatty alcohol + a fatty acyl-CoA = a wax ester + CoA. In terms of biological role, catalyzes the final step in the synthesis of long-chain linear esters (waxes). The protein is Putative long-chain-alcohol O-fatty-acyltransferase 10 of Arabidopsis thaliana (Mouse-ear cress).